A 279-amino-acid polypeptide reads, in one-letter code: Shikimate dehydrogenase (NADP(+)) (279 aa).

Residues 20-22 (SRS) and Thr67 each bind shikimate. Lys71 functions as the Proton acceptor in the catalytic mechanism. Position 83 (Asp83) interacts with NADP(+). Shikimate is bound by residues Asn92 and Asp108. Residues 134–138 (GAGGA) and Leu223 each bind NADP(+). Residue Tyr225 participates in shikimate binding. Gly246 serves as a coordination point for NADP(+).

The protein belongs to the shikimate dehydrogenase family. Homodimer.

The catalysed reaction is shikimate + NADP(+) = 3-dehydroshikimate + NADPH + H(+). It functions in the pathway metabolic intermediate biosynthesis; chorismate biosynthesis; chorismate from D-erythrose 4-phosphate and phosphoenolpyruvate: step 4/7. Functionally, involved in the biosynthesis of the chorismate, which leads to the biosynthesis of aromatic amino acids. Catalyzes the reversible NADPH linked reduction of 3-dehydroshikimate (DHSA) to yield shikimate (SA). The chain is Shikimate dehydrogenase (NADP(+)) from Cereibacter sphaeroides (strain ATCC 17025 / ATH 2.4.3) (Rhodobacter sphaeroides).